The sequence spans 387 residues: Guanylate kinase 1 (387 aa).

Residues 137 to 319 (EKPIVISGPS…CYKKLKNLLG (183 aa)) enclose the Guanylate kinase-like domain. Residue 144–151 (GPSGVGKG) participates in ATP binding. Catalysis depends on residues arginine 177, arginine 270, and arginine 281. Residues asparagine 304 and aspartate 305 each coordinate ATP.

This sequence belongs to the guanylate kinase family. As to quaternary structure, monomer.

It carries out the reaction GMP + ATP = GDP + ADP. Functionally, essential for recycling GMP and indirectly, cGMP. Required for normal development of the gametophyte and embryo, in association with GK2. The sequence is that of Guanylate kinase 1 (GK-1) from Arabidopsis thaliana (Mouse-ear cress).